A 321-amino-acid chain; its full sequence is Necdin (321 aa).

The segment at 1 to 96 (MSEQSKDLSD…QPGPAPPAPA (96 aa)) is disordered. A compositionally biased stretch (low complexity) spans 20–35 (SEVHSSPGVSEGVPPS). Residues 98 to 297 (LVQKAHELMW…QAWPSRYREA (200 aa)) enclose the MAGE domain.

Binds to the transactivation domains of E2F1 and p53. Binds also SV40 large T antigen and adenovirus E1A. Interacts with nucleobindin 1 and 2. In terms of tissue distribution, almost ubiquitous. Detected in fetal brain, lung, liver and kidney; in adult heart, brain, placenta, lung, liver, skeletal muscle, kidney, pancreas, spleen, thymus, prostate, testis, ovary, small intestine and colon. Not detected in peripheral blood leukocytes. In brain, restricted to post-mitotic neurons.

It localises to the perikaryon. It is found in the nucleus. Functionally, growth suppressor that facilitates the entry of the cell into cell cycle arrest. Functionally similar to the retinoblastoma protein it binds to and represses the activity of cell-cycle-promoting proteins such as SV40 large T antigen, adenovirus E1A, and the transcription factor E2F. Necdin also interacts with p53 and works in an additive manner to inhibit cell growth. Also functions as a transcription factor and directly binds to specific guanosine-rich DNA sequences. The sequence is that of Necdin (NDN) from Homo sapiens (Human).